Reading from the N-terminus, the 483-residue chain is Glutamate--tRNA ligase (483 aa).

Positions 11–21 match the 'HIGH' region motif; the sequence is PSPTGLLHIGN. The short motif at 255-259 is the 'KMSKS' region element; that stretch reads KLSKR. Lys258 provides a ligand contact to ATP.

This sequence belongs to the class-I aminoacyl-tRNA synthetase family. Glutamate--tRNA ligase type 1 subfamily. As to quaternary structure, monomer.

It is found in the cytoplasm. It catalyses the reaction tRNA(Glu) + L-glutamate + ATP = L-glutamyl-tRNA(Glu) + AMP + diphosphate. Functionally, catalyzes the attachment of glutamate to tRNA(Glu) in a two-step reaction: glutamate is first activated by ATP to form Glu-AMP and then transferred to the acceptor end of tRNA(Glu). The sequence is that of Glutamate--tRNA ligase from Lactococcus lactis subsp. cremoris (strain MG1363).